The primary structure comprises 374 residues: Alanine racemase (374 aa).

The active-site Proton acceptor; specific for D-alanine is Lys-34. Lys-34 carries the N6-(pyridoxal phosphate)lysine modification. Arg-147 is a substrate binding site. Tyr-271 serves as the catalytic Proton acceptor; specific for L-alanine. Met-319 provides a ligand contact to substrate.

It belongs to the alanine racemase family. It depends on pyridoxal 5'-phosphate as a cofactor.

The enzyme catalyses L-alanine = D-alanine. The protein operates within amino-acid biosynthesis; D-alanine biosynthesis; D-alanine from L-alanine: step 1/1. Functionally, catalyzes the interconversion of L-alanine and D-alanine. May also act on other amino acids. This is Alanine racemase (alr) from Actinobacillus pleuropneumoniae serotype 5b (strain L20).